A 329-amino-acid polypeptide reads, in one-letter code: Peroxidase 30 (329 aa).

The N-terminal stretch at 1 to 27 (MKTMTQLNIAVVVVVTVLIGMLRSSEA) is a signal peptide. 4 cysteine pairs are disulfide-bonded: cysteine 38–cysteine 116, cysteine 71–cysteine 76, cysteine 122–cysteine 324, and cysteine 201–cysteine 234. Residue histidine 69 is the Proton acceptor of the active site. Ca(2+) is bound by residues aspartate 70, valine 73, glycine 75, aspartate 77, and serine 79. N-linked (GlcNAc...) asparagine glycosylation is found at asparagine 83 and asparagine 155. The tract at residues 141–165 (SWSVPTGRRDGRISNKTEATNNIPP) is disordered. Over residues 156 to 165 (KTEATNNIPP) the composition is skewed to polar residues. Substrate is bound at residue proline 164. Asparagine 169 carries N-linked (GlcNAc...) asparagine glycosylation. Histidine 194 contacts heme b. Residue threonine 195 coordinates Ca(2+). N-linked (GlcNAc...) asparagine glycosylation is found at asparagine 210 and asparagine 240. Ca(2+)-binding residues include aspartate 247, serine 250, and aspartate 255. Asparagine 290 carries an N-linked (GlcNAc...) asparagine glycan.

This sequence belongs to the peroxidase family. Classical plant (class III) peroxidase subfamily. Heme b serves as cofactor. Requires Ca(2+) as cofactor. As to expression, mainly expressed in roots.

It is found in the secreted. The enzyme catalyses 2 a phenolic donor + H2O2 = 2 a phenolic radical donor + 2 H2O. In terms of biological role, removal of H(2)O(2), oxidation of toxic reductants, biosynthesis and degradation of lignin, suberization, auxin catabolism, response to environmental stresses such as wounding, pathogen attack and oxidative stress. These functions might be dependent on each isozyme/isoform in each plant tissue. The sequence is that of Peroxidase 30 (PER30) from Arabidopsis thaliana (Mouse-ear cress).